Reading from the N-terminus, the 253-residue chain is Phosphoglycerate mutase 2 (253 aa).

Thr3 carries the post-translational modification Phosphothreonine. Residues Arg10 to Asn17, Cys23 to Gly24, Arg62, Glu89 to Tyr92, Lys100, and Arg116 to Arg117 each bind substrate. His11 (tele-phosphohistidine intermediate) is an active-site residue. Ser14 carries the post-translational modification Phosphoserine. Glu89 (proton donor/acceptor) is an active-site residue. Ser118 carries the post-translational modification Phosphoserine. Thr121 carries the phosphothreonine modification. Phosphotyrosine occurs at positions 132 and 133. At Ser135 the chain carries Phosphoserine. Thr152 is modified (phosphothreonine). Gly187–Asn188 contacts substrate.

It belongs to the phosphoglycerate mutase family. BPG-dependent PGAM subfamily. In terms of assembly, homodimer. Interacts with ENO1. In terms of tissue distribution, expressed in the testes (at protein level).

The catalysed reaction is (2R)-2-phosphoglycerate = (2R)-3-phosphoglycerate. It catalyses the reaction (2R)-3-phospho-glyceroyl phosphate = (2R)-2,3-bisphosphoglycerate + H(+). Functionally, interconversion of 3- and 2-phosphoglycerate with 2,3-bisphosphoglycerate as the primer of the reaction. Can also catalyze the reaction of EC 5.4.2.4 (synthase), but with a reduced activity. The sequence is that of Phosphoglycerate mutase 2 (Pgam2) from Mus musculus (Mouse).